The following is a 324-amino-acid chain: Gamma-soluble NSF attachment protein (324 aa).

Positions 285-298 (NPTINSTAPQQQYS) are enriched in polar residues. The interval 285-324 (NPTINSTAPQQQYSNTTTTTTNNTNNNNPTSQQDDDEDVL) is disordered. Residues 299 to 312 (NTTTTTTNNTNNNN) are compositionally biased toward low complexity.

It belongs to the SNAP family. As to quaternary structure, interacts with nsfA and probably SNARE proteins.

The protein localises to the cytoplasmic vesicle membrane. May be required for vesicular transport between the endoplasmic reticulum and the Golgi apparatus. Involved in vesicle fusion with nsfA and probably SNARE proteins. The protein is Gamma-soluble NSF attachment protein (snpC) of Dictyostelium discoideum (Social amoeba).